A 358-amino-acid chain; its full sequence is MKPFPRAEISGDALKANLKRLRQLAPQSKVMAVVKANGYGHGLLNVAHCLASADGFGLARLEEALELRAGGVSAKLLLLEGFFRPSDVATLVEHDIDTVVHHESQLEMLEAASLAKPVTVWMKIDTGMHRLGFNLDQFEAIYQRLQACANVAKPINLMTHFACADEPDNPATAEQARRFEQMTANLPGDRTLANSAATLYWQATQADWIRPGIALYGVSPVVGDLGRNHGLEPAMELVSQLIAVRDHKAGDPVGYGSYWRAKQDTKLGVVAIGYGDGYPRNAPEGTPVWVNGRLVPVVGRVSMDMLTVDLGLDATDKVGDTAVLWGKALPVEEVAEHIGTIAYELVTKLTPRVAVCLE.

The active-site Proton acceptor; specific for D-alanine is the Lys-35. N6-(pyridoxal phosphate)lysine is present on Lys-35. Arg-130 serves as a coordination point for substrate. Tyr-255 (proton acceptor; specific for L-alanine) is an active-site residue. Residue Met-303 coordinates substrate.

It belongs to the alanine racemase family. Requires pyridoxal 5'-phosphate as cofactor.

It catalyses the reaction L-alanine = D-alanine. It functions in the pathway amino-acid biosynthesis; D-alanine biosynthesis; D-alanine from L-alanine: step 1/1. Catalyzes the interconversion of L-alanine and D-alanine. May also act on other amino acids. This is Alanine racemase (alr) from Shewanella loihica (strain ATCC BAA-1088 / PV-4).